Consider the following 278-residue polypeptide: ADP-dependent (S)-NAD(P)H-hydrate dehydratase (278 aa).

Residues 4–276 (DDDLVRQVIR…KAIPSWMKKL (273 aa)) enclose the YjeF C-terminal domain. (6S)-NADPHX is bound by residues Ala-39, Gly-102, and His-152. AMP is bound at residue Gly-216. Asp-217 is a binding site for (6S)-NADPHX.

Belongs to the NnrD/CARKD family. As to quaternary structure, homotetramer. Mg(2+) is required as a cofactor.

It catalyses the reaction (6S)-NADHX + ADP = AMP + phosphate + NADH + H(+). The enzyme catalyses (6S)-NADPHX + ADP = AMP + phosphate + NADPH + H(+). Functionally, catalyzes the dehydration of the S-form of NAD(P)HX at the expense of ADP, which is converted to AMP. Together with NAD(P)HX epimerase, which catalyzes the epimerization of the S- and R-forms, the enzyme allows the repair of both epimers of NAD(P)HX, a damaged form of NAD(P)H that is a result of enzymatic or heat-dependent hydration. In Streptococcus thermophilus, this protein is ADP-dependent (S)-NAD(P)H-hydrate dehydratase.